Here is a 211-residue protein sequence, read N- to C-terminus: Protein-L-isoaspartate O-methyltransferase (211 aa).

Residue Ser62 is part of the active site.

This sequence belongs to the methyltransferase superfamily. L-isoaspartyl/D-aspartyl protein methyltransferase family.

Its subcellular location is the cytoplasm. The enzyme catalyses [protein]-L-isoaspartate + S-adenosyl-L-methionine = [protein]-L-isoaspartate alpha-methyl ester + S-adenosyl-L-homocysteine. Its function is as follows. Catalyzes the methyl esterification of L-isoaspartyl residues in peptides and proteins that result from spontaneous decomposition of normal L-aspartyl and L-asparaginyl residues. It plays a role in the repair and/or degradation of damaged proteins. This Shewanella frigidimarina (strain NCIMB 400) protein is Protein-L-isoaspartate O-methyltransferase.